The primary structure comprises 882 residues: Alanine--tRNA ligase (882 aa).

Zn(2+) is bound by residues His-571, His-575, Cys-673, and His-677.

It belongs to the class-II aminoacyl-tRNA synthetase family. It depends on Zn(2+) as a cofactor.

The protein localises to the cytoplasm. It carries out the reaction tRNA(Ala) + L-alanine + ATP = L-alanyl-tRNA(Ala) + AMP + diphosphate. Catalyzes the attachment of alanine to tRNA(Ala) in a two-step reaction: alanine is first activated by ATP to form Ala-AMP and then transferred to the acceptor end of tRNA(Ala). Also edits incorrectly charged Ser-tRNA(Ala) and Gly-tRNA(Ala) via its editing domain. The chain is Alanine--tRNA ligase from Stenotrophomonas maltophilia (strain K279a).